A 266-amino-acid chain; its full sequence is NAD kinase 2 (266 aa).

Residue Asp51 is the Proton acceptor of the active site. NAD(+)-binding positions include 51 to 52 (DG), 123 to 124 (NE), Arg150, Asp152, 163 to 168 (TGYSKS), and Ala187.

It belongs to the NAD kinase family. The cofactor is a divalent metal cation.

The protein resides in the cytoplasm. The catalysed reaction is NAD(+) + ATP = ADP + NADP(+) + H(+). In terms of biological role, involved in the regulation of the intracellular balance of NAD and NADP, and is a key enzyme in the biosynthesis of NADP. Catalyzes specifically the phosphorylation on 2'-hydroxyl of the adenosine moiety of NAD to yield NADP. In Oceanobacillus iheyensis (strain DSM 14371 / CIP 107618 / JCM 11309 / KCTC 3954 / HTE831), this protein is NAD kinase 2.